The primary structure comprises 143 residues: Putative pre-16S rRNA nuclease (143 aa).

The protein belongs to the YqgF nuclease family.

Its subcellular location is the cytoplasm. Its function is as follows. Could be a nuclease involved in processing of the 5'-end of pre-16S rRNA. This is Putative pre-16S rRNA nuclease from Lactococcus lactis subsp. cremoris (strain SK11).